The chain runs to 276 residues: Omega-amidase NIT2-B (276 aa).

A CN hydrolase domain is found at 4-248; that stretch reads FRLSLVQFLV…ETVISADIDL (245 aa). The active-site Proton acceptor is the E43. K112 functions as the Proton donor in the catalytic mechanism. C153 acts as the Nucleophile in catalysis.

The protein belongs to the carbon-nitrogen hydrolase superfamily. NIT1/NIT2 family. Homodimer.

Its subcellular location is the cytoplasm. It catalyses the reaction 2-oxoglutaramate + H2O = 2-oxoglutarate + NH4(+). The enzyme catalyses 2-oxosuccinamate + H2O = oxaloacetate + NH4(+). Has omega-amidase activity. The role of omega-amidase is to remove potentially toxic intermediates by converting 2-oxoglutaramate and 2-oxosuccinamate to biologically useful 2-oxoglutarate and oxaloacetate, respectively. This is Omega-amidase NIT2-B (nit2b) from Xenopus laevis (African clawed frog).